A 487-amino-acid chain; its full sequence is Lysophospholipid acyltransferase 5 (487 aa).

Residue A2 is modified to N-acetylalanine. 4 helical membrane passes run 44 to 64 (LIFS…YLFY), 84 to 104 (FNFG…FLIL), 111 to 131 (VTAV…GYYY), and 180 to 200 (GVPS…FLVG). N-linked (GlcNAc...) asparagine glycosylation occurs at N225. The next 2 helical transmembrane spans lie at 236-256 (LGLV…DDYL) and 285-305 (VTCW…FNGF). N-linked (GlcNAc...) asparagine glycosylation is found at N308 and N331. Residues N338 and H374 contribute to the active site. A run of 3 helical transmembrane segments spans residues 364 to 384 (GLSL…LICF), 422 to 442 (LVQQ…FCLF), and 453 to 473 (SIYF…PYIH). The short motif at 484–487 (KKRE) is the Di-lysine motif element.

It belongs to the membrane-bound acyltransferase family. In terms of tissue distribution, detected ubiquitously, with high expression levels in small intestine, brown adipose tissue, liver, kidney and testis. Expressed in liver and both proximal and distal small intestine (at protein level). Expressed in peritoneal macrophages.

It is found in the endoplasmic reticulum membrane. It carries out the reaction a 1-acyl-sn-glycero-3-phosphocholine + an acyl-CoA = a 1,2-diacyl-sn-glycero-3-phosphocholine + CoA. The enzyme catalyses a 1-acyl-sn-glycero-3-phosphoethanolamine + an acyl-CoA = a 1,2-diacyl-sn-glycero-3-phosphoethanolamine + CoA. It catalyses the reaction a 1-acyl-sn-glycero-3-phospho-L-serine + an acyl-CoA = a 1,2-diacyl-sn-glycero-3-phospho-L-serine + CoA. The catalysed reaction is (9Z,12Z)-octadecadienoyl-CoA + a 1-acyl-sn-glycero-3-phosphocholine = 1-acyl-2-(9Z,12Z)-octadecadienoyl-sn-glycero-3-phosphocholine + CoA. It carries out the reaction (5Z,8Z,11Z,14Z)-eicosatetraenoyl-CoA + a 1-acyl-sn-glycero-3-phosphocholine = 1-acyl-2-(5Z,8Z,11Z,14Z-eicosatetraenoyl)-sn-glycero-3-phosphocholine + CoA. The enzyme catalyses dodecanoyl-CoA + 1-hexadecanoyl-sn-glycero-3-phosphocholine = 1-hexadecanoyl-2-dodecanoyl-sn-glycero-3-phosphocholine + CoA. It catalyses the reaction octadecanoyl-CoA + 1-hexadecanoyl-sn-glycero-3-phosphocholine = 1-hexadecanoyl-2-octadecanoyl-sn-glycero-3-phosphocholine + CoA. The catalysed reaction is 1-dodecanoyl-sn-glycero-3-phosphocholine + hexadecanoyl-CoA = 1-dodecanoyl-2-hexadecanoyl-sn-glycero-3-phosphocholine + CoA. It carries out the reaction 1-tetradecanoyl-sn-glycero-3-phosphocholine + hexadecanoyl-CoA = 1-tetradecanoyl-2-hexadecanoyl-sn-glycero-3-phosphocholine + CoA. The enzyme catalyses 1-hexadecanoyl-sn-glycero-3-phosphocholine + hexadecanoyl-CoA = 1,2-dihexadecanoyl-sn-glycero-3-phosphocholine + CoA. It catalyses the reaction 1-octadecanoyl-sn-glycero-3-phosphocholine + hexadecanoyl-CoA = 1-octadecanoyl-2-hexadecanoyl-sn-glycero-3-phosphocholine + CoA. The catalysed reaction is 1-(9Z-octadecenoyl)-sn-glycero-3-phosphocholine + hexadecanoyl-CoA = 1-(9Z-octadecenoyl)-2-hexadecanoyl-sn-glycero-3-phosphocholine + CoA. It carries out the reaction (9Z)-hexadecenoyl-CoA + 1-hexadecanoyl-sn-glycero-3-phosphocholine = 1-hexadecanoyl-2-(9Z-hexadecenoyl)-sn-glycero-3-phosphocholine + CoA. The enzyme catalyses 1-hexadecanoyl-sn-glycero-3-phosphocholine + (9Z)-octadecenoyl-CoA = 1-hexadecanoyl-2-(9Z-octadecenoyl)-sn-glycero-3-phosphocholine + CoA. It catalyses the reaction (9Z,12Z)-octadecadienoyl-CoA + 1-hexadecanoyl-sn-glycero-3-phosphocholine = 1-hexadecanoyl-2-(9Z,12Z-octadecadienoyl)-sn-glycero-3-phosphocholine + CoA. The catalysed reaction is 1-dodecanoyl-sn-glycero-3-phosphocholine + (5Z,8Z,11Z,14Z)-eicosatetraenoyl-CoA = 1-dodecanoyl-2-(5Z,8Z,11Z,14Z)-eicosatetraenoyl-sn-glycero-3-phosphocholine + CoA. It carries out the reaction (5Z,8Z,11Z,14Z)-eicosatetraenoyl-CoA + 1-hexadecanoyl-sn-glycero-3-phosphocholine = 1-hexadecanoyl-2-(5Z,8Z,11Z,14Z-eicosatetraenoyl)-sn-glycero-3-phosphocholine + CoA. The enzyme catalyses 1-octadecanoyl-sn-glycero-3-phosphocholine + (5Z,8Z,11Z,14Z)-eicosatetraenoyl-CoA = 1-octadecanoyl-2-(5Z,8Z,11Z,14Z-eicosatetraenoyl)-sn-glycero-3-phosphocholine + CoA. It catalyses the reaction 1-eicosanoyl-sn-glycero-3-phosphocholine + (5Z,8Z,11Z,14Z)-eicosatetraenoyl-CoA = 1-eicosanoyl-2-(5Z,8Z,11Z,14Z)-eicosatetraenoyl-sn-glycero-3-phosphocholine + CoA. The catalysed reaction is 1-(9Z-octadecenoyl)-sn-glycero-3-phosphocholine + (9Z)-octadecenoyl-CoA = 1,2-di-(9Z-octadecenoyl)-sn-glycero-3-phosphocholine + CoA. It carries out the reaction 1-(9Z-octadecenoyl)-sn-glycero-3-phosphocholine + (9Z,12Z)-octadecadienoyl-CoA = 1-(9Z)-octadecenoyl-2-(9Z,12Z)-octadecadienoyl-sn-glycero-3-phosphocholine + CoA. The enzyme catalyses 1-(9Z-octadecenoyl)-sn-glycero-3-phosphocholine + (5Z,8Z,11Z,14Z)-eicosatetraenoyl-CoA = 1-(9Z)-octadecenoyl-2-(5Z,8Z,11Z,14Z)-icosatetraenoyl-sn-glycero-3-phosphocholine + CoA. It catalyses the reaction a 1-acyl-sn-glycero-3-phosphoethanolamine + (9Z,12Z)-octadecadienoyl-CoA = 1-acyl-2-(9Z,12Z)-octadecadienoyl-sn-glycero-3-phosphoethanolamine + CoA. The catalysed reaction is 1-(9Z-octadecenoyl)-sn-glycero-3-phosphoethanolamine + (9Z,12Z)-octadecadienoyl-CoA = 1-(9Z)-octadecenoyl-2-(9Z,12Z)-octadecadienoyl-sn-glycero-3-phosphoethanolamine + CoA. It carries out the reaction 1-(10Z-heptadecenoyl)-sn-glycero-3-phosphoethanolamine + (9Z,12Z)-octadecadienoyl-CoA = 1-(10Z-heptadecenoyl)-2-(9Z,12Z-octadecadienoyl)-sn-glycero-3-phosphoethanolamine + CoA. The enzyme catalyses a 1-acyl-sn-glycero-3-phosphoethanolamine + (5Z,8Z,11Z,14Z)-eicosatetraenoyl-CoA = 1-acyl-2-(5Z,8Z,11Z,14Z)-eicosatetraenoyl-sn-glycero-3-phosphoethanolamine + CoA. It catalyses the reaction 1-hexadecanoyl-sn-glycero-3-phosphoethanolamine + (5Z,8Z,11Z,14Z)-eicosatetraenoyl-CoA = 1-hexadecanoyl-2-(5Z,8Z,11Z,14Z-eicosatetraenoyl)-sn-glycero-3-phosphoethanolamine + CoA. The catalysed reaction is 1-(9Z-octadecenoyl)-sn-glycero-3-phosphoethanolamine + (5Z,8Z,11Z,14Z)-eicosatetraenoyl-CoA = 1-(9Z)-octadecenoyl-2-(5Z,8Z,11Z,14Z)-eicosatetraenoyl-sn-glycero-3-phosphoethanolamine + CoA. It carries out the reaction 1-(10Z-heptadecenoyl)-sn-glycero-3-phosphoethanolamine + (5Z,8Z,11Z,14Z)-eicosatetraenoyl-CoA = 1-(10Z-heptadecenoyl)-2-(5Z,8Z,11Z,14Z-eicosatetraenoyl)-sn-glycero-3-phosphoethanolamine + CoA. The enzyme catalyses a 1-O-(1Z-alkenyl)-sn-glycero-3-phosphoethanolamine + (5Z,8Z,11Z,14Z)-eicosatetraenoyl-CoA = 1-O-(1Z)-alkenyl-2-(5Z,8Z,11Z,14Z)-eicosatetraenoyl-sn-glycero-3-phosphoethanolamine + CoA. It catalyses the reaction a 1-acyl-sn-glycero-3-phospho-L-serine + (9Z,12Z)-octadecadienoyl-CoA = 1-acyl-2-(9Z,12Z-octadecadienoyl)-sn-glycero-3-phospho-L-serine + CoA. The catalysed reaction is a 1-acyl-sn-glycero-3-phospho-L-serine + (5Z,8Z,11Z,14Z)-eicosatetraenoyl-CoA = 1-acyl-2-(5Z,8Z,11Z,14Z-eicosatetraenoyl)-sn-glycero-3-phospho-L-serine + CoA. It carries out the reaction 1-hexadecanoyl-sn-glycero-3-phospho-L-serine + (9Z)-octadecenoyl-CoA = 1-hexadecanoyl-2-(9Z-octadecenoyl)-sn-glycero-3-phospho-L-serine + CoA. The enzyme catalyses 1-(9Z-octadecenoyl)-sn-glycero-3-phospho-L-serine + (9Z)-octadecenoyl-CoA = 1,2-di-(9Z)-octadecenoyl-sn-glycero-3-phospho-L-serine + CoA. It catalyses the reaction 1-hexadecanoyl-sn-glycero-3-phospho-L-serine + (9Z,12Z)-octadecadienoyl-CoA = 1-hexadecanoyl-2-(9Z,12Z-octadecadienoyl)-sn-glycero-3-phospho-L-serine + CoA. The catalysed reaction is 1-(9Z-octadecenoyl)-sn-glycero-3-phospho-L-serine + (9Z,12Z)-octadecadienoyl-CoA = 1-(9Z-octadecenoyl)-2-(9Z,12Z-octadienoyl)-sn-glycero-3-phospho-L-serine + CoA. It carries out the reaction 1-hexadecanoyl-sn-glycero-3-phospho-L-serine + (5Z,8Z,11Z,14Z)-eicosatetraenoyl-CoA = 1-hexadecanoyl-2-(5Z,8Z,11Z,14Z-eicosatetraenoyl)-sn-glycero-3-phospho-L-serine + CoA. The enzyme catalyses 1-(9Z-octadecenoyl)-sn-glycero-3-phospho-L-serine + (5Z,8Z,11Z,14Z)-eicosatetraenoyl-CoA = 1-(9Z-octadecenoyl)-2-(5Z,8Z,11Z,14Z-eicosatetraenoyl)-sn-glycero-3-phospho-L-serine + CoA. Its pathway is lipid metabolism; phospholipid metabolism. In terms of biological role, lysophospholipid O-acyltransferase (LPLAT) that catalyzes the reacylation step of the phospholipid remodeling process also known as the Lands cycle. Catalyzes transfer of the fatty acyl chain from fatty acyl-CoA to 1-acyl lysophospholipid to form various classes of phospholipids. Converts 1-acyl lysophosphatidylcholine (LPC) into phosphatidylcholine (PC) (LPCAT activity), 1-acyl lysophosphatidylserine (LPS) into phosphatidylserine (PS) (LPSAT activity) and 1-acyl lysophosphatidylethanolamine (LPE) into phosphatidylethanolamine (PE) (LPEAT activity). Favors polyunsaturated fatty acyl-CoAs as acyl donors compared to saturated fatty acyl-CoAs. Has higher activity for LPC acyl acceptors compared to LPEs and LPSs. Can also transfer the fatty acyl chain from fatty acyl-CoA to 1-O-alkyl lysophospholipid or 1-O-alkenyl lysophospholipid with lower efficiency. Acts as a major LPC O-acyltransferase in liver and intestine. As a component of the liver X receptor/NR1H3 or NR1H2 signaling pathway, mainly catalyzes the incorporation of arachidonate into PCs of endoplasmic reticulum (ER) membranes, increasing membrane dynamics and enabling triacylglycerols transfer to nascent very low-density lipoprotein (VLDL) particles. Promotes processing of sterol regulatory protein SREBF1 in hepatocytes, likely by facilitating the translocation of SREBF1-SCAP complex from ER to the Golgi apparatus. Participates in mechanisms by which the liver X receptor/NR1H3 or NR1H2 signaling pathway counteracts lipid-induced ER stress response and inflammation. Down-regulates hepatic inflammation by limiting arachidonic acid availability for synthesis of inflammatory eicosanoids, such as prostaglandins. In enterocytes, acts as a component of a gut-brain feedback loop that coordinates dietary lipid absorption and food intake. Regulates the abundance of PCs containing linoleate and arachidonate in enterocyte membranes, enabling passive diffusion of fatty acids and cholesterol across the membrane for efficient chylomicron assembly. In the intestinal crypt, acts as a component of dietary-responsive phospholipid-cholesterol axis, regulating the biosynthesis of cholesterol and its mitogenic effects on intestinal stem cells. The polypeptide is Lysophospholipid acyltransferase 5 (Lpcat3) (Mus musculus (Mouse)).